Consider the following 61-residue polypeptide: Large ribosomal subunit protein bL32 (61 aa).

Basic residues predominate over residues 1-16 (MAVPKRKTSPSKRGMR). The tract at residues 1–41 (MAVPKRKTSPSKRGMRRSADALKASTYVEDKNSGELRRPHH) is disordered. Basic and acidic residues predominate over residues 28 to 41 (VEDKNSGELRRPHH).

It belongs to the bacterial ribosomal protein bL32 family.

In Rhizobium rhizogenes (strain K84 / ATCC BAA-868) (Agrobacterium radiobacter), this protein is Large ribosomal subunit protein bL32.